An 89-amino-acid polypeptide reads, in one-letter code: Signal recognition particle 19 kDa protein (89 aa).

Belongs to the SRP19 family. In terms of assembly, part of the signal recognition particle protein translocation system, which is composed of SRP and FtsY. Archaeal SRP consists of a 7S RNA molecule of 300 nucleotides and two protein subunits: SRP54 and SRP19.

Its subcellular location is the cytoplasm. Involved in targeting and insertion of nascent membrane proteins into the cytoplasmic membrane. Binds directly to 7S RNA and mediates binding of the 54 kDa subunit of the SRP. In Methanococcus vannielii (strain ATCC 35089 / DSM 1224 / JCM 13029 / OCM 148 / SB), this protein is Signal recognition particle 19 kDa protein.